Reading from the N-terminus, the 402-residue chain is WAT1-related protein At5g07050 (402 aa).

10 consecutive transmembrane segments (helical) span residues 20–40 (FAMI…KISL), 48–68 (VLVV…AFFF), 74–94 (PKIT…GPVI), 109–129 (TFSC…AVLF), 149–169 (VVTV…VELF), 196–216 (FLKG…LFVL), 229–249 (LSLT…VTFV), 266–286 (LAAA…QGIV), 293–313 (VFAT…GSFV), and 318–338 (IFLG…AVLW). 2 consecutive EamA domains span residues 29-159 (YAGM…MLMT) and 208-337 (LAWA…YAVL).

The protein belongs to the drug/metabolite transporter (DMT) superfamily. Plant drug/metabolite exporter (P-DME) (TC 2.A.7.4) family.

Its subcellular location is the membrane. The protein is WAT1-related protein At5g07050 of Arabidopsis thaliana (Mouse-ear cress).